The sequence spans 706 residues: Fatty acid oxidation complex subunit alpha (706 aa).

Positions 1–188 are enoyl-CoA hydratase; sequence MEKTFNLTRR…KMGLVNDVVP (188 aa). Positions 308-706 are 3-hydroxyacyl-CoA dehydrogenase; that stretch reads RKVKKAVILG…TMAQENAHFF (399 aa).

The protein in the N-terminal section; belongs to the enoyl-CoA hydratase/isomerase family. This sequence in the central section; belongs to the 3-hydroxyacyl-CoA dehydrogenase family. Heterotetramer of two alpha chains (FadJ) and two beta chains (FadI).

The protein localises to the cytoplasm. The catalysed reaction is a (3S)-3-hydroxyacyl-CoA = a (2E)-enoyl-CoA + H2O. The enzyme catalyses a 4-saturated-(3S)-3-hydroxyacyl-CoA = a (3E)-enoyl-CoA + H2O. It catalyses the reaction a (3S)-3-hydroxyacyl-CoA + NAD(+) = a 3-oxoacyl-CoA + NADH + H(+). It carries out the reaction (3S)-3-hydroxybutanoyl-CoA = (3R)-3-hydroxybutanoyl-CoA. Its pathway is lipid metabolism; fatty acid beta-oxidation. In terms of biological role, catalyzes the formation of a hydroxyacyl-CoA by addition of water on enoyl-CoA. Also exhibits 3-hydroxyacyl-CoA epimerase and 3-hydroxyacyl-CoA dehydrogenase activities. The sequence is that of Fatty acid oxidation complex subunit alpha from Shewanella baltica (strain OS185).